The chain runs to 377 residues: Serine/threonine-protein phosphatase PP2A-2 catalytic subunit (377 aa).

The tract at residues 1–66 is disordered; sequence MDMEIDDPMH…SGIADHKSSK (66 aa). The span at 28-40 shows a compositional bias: basic and acidic residues; that stretch reads DDGKNNTKARSND. Ser-38 is modified (phosphoserine). Residue Thr-43 is modified to Phosphothreonine. Asp-125, His-127, Asp-153, and Asn-185 together coordinate Mn(2+). The active-site Proton donor is His-186. Mn(2+)-binding residues include His-235 and His-309. Leu-377 is modified (leucine methyl ester).

Belongs to the PPP phosphatase family. PP-2A subfamily. In terms of assembly, inactivated in a complex with phosphatase methylesterase PPE1 (PP2Ai). Interacts with phosphatase 2A activator RRD2, which can reactivate PP2Ai by dissociating the catalytic subunit from the complex. Interacts with TAP42. Requires Mn(2+) as cofactor. Post-translationally, reversibly methyl esterified on Leu-377 by leucine carboxyl methyltransferase 1 (PPM1) and protein phosphatase methylesterase 1 (PPE1). Carboxyl methylation influences the affinity of the catalytic subunit for the different regulatory subunits, thereby modulating the PP2A holoenzyme's substrate specificity, enzyme activity and cellular localization.

It catalyses the reaction O-phospho-L-seryl-[protein] + H2O = L-seryl-[protein] + phosphate. It carries out the reaction O-phospho-L-threonyl-[protein] + H2O = L-threonyl-[protein] + phosphate. Its function is as follows. Exact function not known, phosphatase 2A performs an essential cellular function. The sequence is that of Serine/threonine-protein phosphatase PP2A-2 catalytic subunit (PPH22) from Saccharomyces cerevisiae (strain ATCC 204508 / S288c) (Baker's yeast).